We begin with the raw amino-acid sequence, 122 residues long: Large ribosomal subunit protein uL14 (122 aa).

Belongs to the universal ribosomal protein uL14 family. In terms of assembly, part of the 50S ribosomal subunit. Forms a cluster with proteins L3 and L19. In the 70S ribosome, L14 and L19 interact and together make contacts with the 16S rRNA in bridges B5 and B8.

Its function is as follows. Binds to 23S rRNA. Forms part of two intersubunit bridges in the 70S ribosome. The sequence is that of Large ribosomal subunit protein uL14 from Chelativorans sp. (strain BNC1).